Reading from the N-terminus, the 414-residue chain is CinA-like protein (414 aa).

Belongs to the CinA family.

The sequence is that of CinA-like protein from Acidobacterium capsulatum (strain ATCC 51196 / DSM 11244 / BCRC 80197 / JCM 7670 / NBRC 15755 / NCIMB 13165 / 161).